Here is a 460-residue protein sequence, read N- to C-terminus: Chromosomal replication initiator protein DnaA (460 aa).

Residues 1–73 (MEISIDSLWS…ANVVQSILGH (73 aa)) are domain I, interacts with DnaA modulators. Residues 73-116 (HPVEIYITVAKGEEFEEIGGGGAWELPTTNSIYETPNQNRQPNT) form a domain II region. Positions 117–333 (ELNAKYVFSR…GALTRALAYI (217 aa)) are domain III, AAA+ region. Residues G161, G163, K164, and T165 each coordinate ATP. The segment at 334 to 460 (SIWGLPMTVA…MNSRSRKPSL (127 aa)) is domain IV, binds dsDNA.

It belongs to the DnaA family. As to quaternary structure, oligomerizes as a right-handed, spiral filament on DNA at oriC.

It is found in the cytoplasm. Its function is as follows. Plays an essential role in the initiation and regulation of chromosomal replication. ATP-DnaA binds to the origin of replication (oriC) to initiate formation of the DNA replication initiation complex once per cell cycle. Binds the DnaA box (a 9 base pair repeat at the origin) and separates the double-stranded (ds)DNA. Forms a right-handed helical filament on oriC DNA; dsDNA binds to the exterior of the filament while single-stranded (ss)DNA is stabiized in the filament's interior. The ATP-DnaA-oriC complex binds and stabilizes one strand of the AT-rich DNA unwinding element (DUE), permitting loading of DNA polymerase. After initiation quickly degrades to an ADP-DnaA complex that is not apt for DNA replication. Binds acidic phospholipids. This is Chromosomal replication initiator protein DnaA from Trichormus variabilis (strain ATCC 29413 / PCC 7937) (Anabaena variabilis).